Reading from the N-terminus, the 262-residue chain is Tetratricopeptide repeat protein 33 (262 aa).

TPR repeat units lie at residues 59–92 (SKQLKDEGASLAENKRYREAIQKWDEALQLTPND), 93–126 (ATLYEMKSQVLMSLHEMFPAVHAAEMAVQQNPHS), and 127–160 (WESWQTLGRAQLGLGEIILAIRSFQVALHIYPMN). S197 is modified (phosphoserine). The residue at position 251 (T251) is a Phosphothreonine.

This is Tetratricopeptide repeat protein 33 (TTC33) from Homo sapiens (Human).